We begin with the raw amino-acid sequence, 258 residues long: UPF0246 protein Jann_0444 (258 aa).

Belongs to the UPF0246 family.

This is UPF0246 protein Jann_0444 from Jannaschia sp. (strain CCS1).